The following is a 302-amino-acid chain: Dihydroorotate dehydrogenase B (NAD(+)), catalytic subunit (302 aa).

FMN-binding positions include Ser20 and 44–45 (KG). Substrate contacts are provided by residues Lys44 and 68–72 (NSVGL). FMN is bound by residues Asn98 and Asn125. Residue Asn125 participates in substrate binding. The active-site Nucleophile is the Cys128. Positions 163 and 189 each coordinate FMN. Substrate is bound at residue 190 to 191 (NT). Residues Gly215, 241–242 (GG), and 263–264 (GT) contribute to the FMN site.

The protein belongs to the dihydroorotate dehydrogenase family. Type 1 subfamily. In terms of assembly, heterotetramer of 2 PyrK and 2 PyrD type B subunits. FMN is required as a cofactor.

The protein resides in the cytoplasm. It catalyses the reaction (S)-dihydroorotate + NAD(+) = orotate + NADH + H(+). Its pathway is pyrimidine metabolism; UMP biosynthesis via de novo pathway; orotate from (S)-dihydroorotate (NAD(+) route): step 1/1. Functionally, catalyzes the conversion of dihydroorotate to orotate with NAD(+) as electron acceptor. The sequence is that of Dihydroorotate dehydrogenase B (NAD(+)), catalytic subunit (pyrD) from Thermoanaerobacter sp. (strain X514).